The following is a 164-amino-acid chain: B-phycoerythrin alpha chain (164 aa).

Cys-82 and Cys-139 together coordinate (2R,3E)-phycoerythrobilin.

Belongs to the phycobiliprotein family. In terms of assembly, heteromer of 6 alpha, 6 beta and one gamma chain. Post-translationally, contains two covalently linked bilin chromophores.

The protein localises to the plastid. It localises to the chloroplast thylakoid membrane. In terms of biological role, light-harvesting photosynthetic bile pigment-protein from the phycobiliprotein complex. The protein is B-phycoerythrin alpha chain (cpeA) of Rhodella violacea (Red alga).